The primary structure comprises 156 residues: MAVKIKLTRLGKIRNPQYRIIVADARTRRDGRAIEVIGRYHPKEEPSLIQIDSERAQYWLGVGAQPTEPVLALLKITGDWQKFKGLPGAEGTLKVKEPKPSKLDLFNAALAEAESGTTAAATTPKKKKAPKKDEAAEAPAEAAEAPAEAADAASES.

Low complexity-rich tracts occupy residues 113–123 (AESGTTAAATT) and 137–156 (EAPAEAAEAPAEAADAASES). Residues 113 to 156 (AESGTTAAATTPKKKKAPKKDEAAEAPAEAAEAPAEAADAASES) form a disordered region.

This sequence belongs to the bacterial ribosomal protein bS16 family.

The protein is Small ribosomal subunit protein bS16 of Mycolicibacterium smegmatis (strain ATCC 700084 / mc(2)155) (Mycobacterium smegmatis).